Here is a 300-residue protein sequence, read N- to C-terminus: Glutamyl-Q tRNA(Asp) synthetase (300 aa).

L-glutamate contacts are provided by residues Arg-14 to Thr-18 and Glu-50. Positions Pro-17–Ser-27 match the 'HIGH' region motif. Cys-106, Cys-108, Tyr-120, and Cys-124 together coordinate Zn(2+). L-glutamate is bound by residues Tyr-177 and Arg-195. Positions Lys-233–Ser-237 match the 'KMSKS' region motif. Lys-236 provides a ligand contact to ATP.

Belongs to the class-I aminoacyl-tRNA synthetase family. GluQ subfamily. Zn(2+) serves as cofactor.

Its function is as follows. Catalyzes the tRNA-independent activation of glutamate in presence of ATP and the subsequent transfer of glutamate onto a tRNA(Asp). Glutamate is transferred on the 2-amino-5-(4,5-dihydroxy-2-cyclopenten-1-yl) moiety of the queuosine in the wobble position of the QUC anticodon. The protein is Glutamyl-Q tRNA(Asp) synthetase of Pseudomonas putida (strain ATCC 47054 / DSM 6125 / CFBP 8728 / NCIMB 11950 / KT2440).